Here is a 177-residue protein sequence, read N- to C-terminus: Glia associated membrane protein glam-1 (177 aa).

The next 3 helical transmembrane spans lie at 19 to 39 (PLVV…FWMS), 42 to 62 (FGMA…LFGA), and 76 to 96 (VTFA…VVFA).

The protein localises to the membrane. This is Glia associated membrane protein glam-1 from Caenorhabditis elegans.